Consider the following 56-residue polypeptide: Large ribosomal subunit protein bL32 (56 aa).

The interval 1–26 is disordered; sequence MAVQQNKKSRSKRGMRRSHDALSTAQ. A compositionally biased stretch (basic residues) spans 7–16; the sequence is KKSRSKRGMR.

This sequence belongs to the bacterial ribosomal protein bL32 family.

In Shewanella denitrificans (strain OS217 / ATCC BAA-1090 / DSM 15013), this protein is Large ribosomal subunit protein bL32.